A 179-amino-acid chain; its full sequence is Replication restart protein DnaT (179 aa).

The disordered stretch occupies residues 156 to 179 (GGLPKRDVNTVSEPDSQIPPGFRG).

This sequence belongs to the DnaT family. Homooligomerizes. Interacts with PriB. Component of the replication restart primosome. Primosome assembly occurs via a 'hand-off' mechanism. PriA binds to replication forks, subsequently PriB then DnaT bind; DnaT then displaces ssDNA to generate the helicase loading substrate.

In terms of biological role, involved in the restart of stalled replication forks, which reloads the replicative helicase on sites other than the origin of replication. Can function in multiple replication restart pathways. Displaces ssDNA from a PriB-ssDNA complex. Probably forms a spiral filament on ssDNA. The chain is Replication restart protein DnaT from Escherichia coli O81 (strain ED1a).